Reading from the N-terminus, the 426-residue chain is Adenylosuccinate synthetase (426 aa).

GTP-binding positions include 12 to 18 (GDEGKGK) and 40 to 42 (GHT). Asp-13 serves as the catalytic Proton acceptor. Mg(2+) contacts are provided by Asp-13 and Gly-40. Residues 13–16 (DEGK), 38–41 (NAGH), Thr-131, Arg-145, Gln-226, Thr-241, and Arg-305 each bind IMP. The active-site Proton donor is His-41. 301 to 307 (ATTGRKR) contacts substrate. GTP is bound by residues Arg-307, 333-335 (KLD), and 415-417 (SVG).

Belongs to the adenylosuccinate synthetase family. In terms of assembly, homodimer. Mg(2+) serves as cofactor.

The protein localises to the cytoplasm. The enzyme catalyses IMP + L-aspartate + GTP = N(6)-(1,2-dicarboxyethyl)-AMP + GDP + phosphate + 2 H(+). It participates in purine metabolism; AMP biosynthesis via de novo pathway; AMP from IMP: step 1/2. Functionally, plays an important role in the de novo pathway of purine nucleotide biosynthesis. Catalyzes the first committed step in the biosynthesis of AMP from IMP. The sequence is that of Adenylosuccinate synthetase from Nitratidesulfovibrio vulgaris (strain ATCC 29579 / DSM 644 / CCUG 34227 / NCIMB 8303 / VKM B-1760 / Hildenborough) (Desulfovibrio vulgaris).